A 512-amino-acid polypeptide reads, in one-letter code: Maturase K (512 aa).

It belongs to the intron maturase 2 family. MatK subfamily.

It localises to the plastid. It is found in the chloroplast. Usually encoded in the trnK tRNA gene intron. Probably assists in splicing its own and other chloroplast group II introns. The protein is Maturase K of Lilium canadense (Canada lily).